The following is a 247-amino-acid chain: Trypsin-4 (247 aa).

Positions 1-15 (MKISIFFAFLGAAVA) are cleaved as a signal peptide. A propeptide spans 16–23 (LPVNDDDK) (activation peptide). Residues 24 to 245 (IVGGYTCPKH…YLSWIQETMA (222 aa)) enclose the Peptidase S1 domain. Cystine bridges form between cysteine 30/cysteine 161, cysteine 49/cysteine 65, cysteine 133/cysteine 234, cysteine 140/cysteine 207, cysteine 172/cysteine 186, and cysteine 197/cysteine 221. Histidine 64 serves as the catalytic Charge relay system. Ca(2+)-binding residues include glutamate 76, asparagine 78, valine 81, and glutamate 86. Aspartate 108 functions as the Charge relay system in the catalytic mechanism. Serine 201 functions as the Charge relay system in the catalytic mechanism.

This sequence belongs to the peptidase S1 family. Ca(2+) is required as a cofactor. Proteolytically cleaved and activated by an autocatalytic mechanism. Cleavage by CTRC inhibits autoactivation.

It localises to the secreted. The protein resides in the extracellular space. The enzyme catalyses Preferential cleavage: Arg-|-Xaa, Lys-|-Xaa.. Its activity is regulated as follows. Activated by autocatalytic cleavage. Cleavage by CTRC inhibits autoactivation. Its function is as follows. Serine protease capable of autoactivation. This Rattus norvegicus (Rat) protein is Trypsin-4.